The chain runs to 306 residues: Ribonuclease Z (306 aa).

Positions 63, 65, 67, 68, 141, 211, and 269 each coordinate Zn(2+). Aspartate 67 acts as the Proton acceptor in catalysis.

Belongs to the RNase Z family. Homodimer. It depends on Zn(2+) as a cofactor.

It catalyses the reaction Endonucleolytic cleavage of RNA, removing extra 3' nucleotides from tRNA precursor, generating 3' termini of tRNAs. A 3'-hydroxy group is left at the tRNA terminus and a 5'-phosphoryl group is left at the trailer molecule.. Zinc phosphodiesterase, which displays some tRNA 3'-processing endonuclease activity. Probably involved in tRNA maturation, by removing a 3'-trailer from precursor tRNA. In Staphylococcus aureus (strain bovine RF122 / ET3-1), this protein is Ribonuclease Z.